The sequence spans 309 residues: MSRTILQPGQIEAAANIPPHLHQPSRDLFARRGERLLQLAEGHPMGDYLRLVAGLCRLQQALLDNPPALAPLDPERLRKSREHGMPPLAYDLLVREGAWLPWLDALLAGYPAPANAAVGAALEQLREAEEGQRKAWAIALLSGQFDLLPAALVPFLGAALQVAWSHWLLGLEEGAVVETESRTLCPACGSPPMAGMIRQGGKETGLRYLSCSLCACEWHYVRIKCSHCEESKHLAYLSLEHDGQPAEKAVLRAETCPSCQGYLKQFYLEFDRHADALADDLASLALDMRLAEDGYLRRSPNLLLAPGGE.

The protein belongs to the FdhE family.

The protein localises to the cytoplasm. Necessary for formate dehydrogenase activity. The sequence is that of Protein FdhE homolog from Pseudomonas aeruginosa (strain ATCC 15692 / DSM 22644 / CIP 104116 / JCM 14847 / LMG 12228 / 1C / PRS 101 / PAO1).